A 608-amino-acid polypeptide reads, in one-letter code: DNA mismatch repair protein MutL (608 aa).

This sequence belongs to the DNA mismatch repair MutL/HexB family.

Its function is as follows. This protein is involved in the repair of mismatches in DNA. It is required for dam-dependent methyl-directed DNA mismatch repair. May act as a 'molecular matchmaker', a protein that promotes the formation of a stable complex between two or more DNA-binding proteins in an ATP-dependent manner without itself being part of a final effector complex. This Anaeromyxobacter dehalogenans (strain 2CP-C) protein is DNA mismatch repair protein MutL.